Consider the following 85-residue polypeptide: CDC42 small effector protein 2 (85 aa).

S-palmitoyl cysteine attachment occurs at residues C10 and C11. In terms of domain architecture, CRIB spans 29–42; sequence IGEPTNFVHTAHVG.

The protein belongs to the CDC42SE/SPEC family.

The protein localises to the cytoplasm. It localises to the cytoskeleton. The protein resides in the cell membrane. Functionally, probably involved in the organization of the actin cytoskeleton by acting downstream of CDC42, inducing actin filament assembly. This chain is CDC42 small effector protein 2 (cdc42se2), found in Danio rerio (Zebrafish).